The following is a 230-amino-acid chain: 5'-methylthioadenosine/S-adenosylhomocysteine nucleosidase (230 aa).

The active-site Proton acceptor is Glu12. Substrate is bound by residues Gly78, Ile153, and 174 to 175 (ME). The active-site Proton donor is Asp198.

Belongs to the PNP/UDP phosphorylase family. MtnN subfamily.

It catalyses the reaction S-adenosyl-L-homocysteine + H2O = S-(5-deoxy-D-ribos-5-yl)-L-homocysteine + adenine. The enzyme catalyses S-methyl-5'-thioadenosine + H2O = 5-(methylsulfanyl)-D-ribose + adenine. The catalysed reaction is 5'-deoxyadenosine + H2O = 5-deoxy-D-ribose + adenine. It functions in the pathway amino-acid biosynthesis; L-methionine biosynthesis via salvage pathway; S-methyl-5-thio-alpha-D-ribose 1-phosphate from S-methyl-5'-thioadenosine (hydrolase route): step 1/2. In terms of biological role, catalyzes the irreversible cleavage of the glycosidic bond in both 5'-methylthioadenosine (MTA) and S-adenosylhomocysteine (SAH/AdoHcy) to adenine and the corresponding thioribose, 5'-methylthioribose and S-ribosylhomocysteine, respectively. Also cleaves 5'-deoxyadenosine, a toxic by-product of radical S-adenosylmethionine (SAM) enzymes, into 5-deoxyribose and adenine. The protein is 5'-methylthioadenosine/S-adenosylhomocysteine nucleosidase of Shewanella pealeana (strain ATCC 700345 / ANG-SQ1).